We begin with the raw amino-acid sequence, 956 residues long: Matrilin-2 (956 aa).

The signal sequence occupies residues 1–23 (MEKMLVGCLLMLGQLFLVLPVDG). One can recognise a VWFA 1 domain in the interval 57–232 (DLVFIIDSSR…SQIESLTSVF (176 aa)). A glycan (N-linked (GlcNAc...) asparagine) is linked at N221. EGF-like domains are found at residues 238–278 (TVHM…KTCR), 279–319 (IQDL…KRCT), 320–360 (AVDY…KTCS), 361–401 (KIDY…KTCR), 402–442 (RINY…KTCS), 443–483 (RVDH…KTCS), 484–524 (RADY…KTCA), 525–565 (KLDS…KTCR), 566–606 (RKDV…KRCR), and 607–647 (RKNV…KHCK). Cystine bridges form between C242/C253, C249/C262, C264/C277, C283/C294, C290/C303, C305/C318, C324/C335, C331/C344, C346/C359, C365/C376, C372/C385, C387/C400, C406/C417, C413/C426, C428/C441, C447/C458, C454/C467, C469/C482, C488/C499, C495/C508, C510/C523, C529/C540, C536/C549, C551/C564, C570/C581, C577/C590, C592/C605, C611/C622, C618/C631, and C633/C646. The VWFA 2 domain maps to 655–830 (DLVFVIDGSK…STMGEISEKL (176 aa)). Residue N890 is glycosylated (N-linked (GlcNAc...) asparagine). Positions 917–955 (KCENLILFQNVANEEVRKLTQRLEEMTQRMEALENRLKY) form a coiled coil.

Detected in a variety of organs, including calvaria, uterus, heart and brain, as well as fibroblast and osteoblast cell lines.

It localises to the secreted. Functionally, involved in matrix assembly. The chain is Matrilin-2 (Matn2) from Mus musculus (Mouse).